Reading from the N-terminus, the 472-residue chain is Riboflavin transporter RibJ (472 aa).

The Cytoplasmic segment spans residues M1 to D11. A helical transmembrane segment spans residues H12–I32. Over D33–S58 the chain is Extracellular. A helical transmembrane segment spans residues L59–V79. Topologically, residues D80–R85 are cytoplasmic. Residues L86–A106 traverse the membrane as a helical segment. At H107 to N108 the chain is on the extracellular side. An N-linked (GlcNAc...) asparagine glycan is attached at N108. Residues V109–S129 form a helical membrane-spanning segment. Residues P130–G144 are Cytoplasmic-facing. Residues L145–A165 form a helical membrane-spanning segment. The Extracellular portion of the chain corresponds to G166 to R179. A helical membrane pass occupies residues L180–A196. Topologically, residues R197 to N271 are cytoplasmic. The disordered stretch occupies residues P200–G248. Over residues G214–R233 the composition is skewed to basic and acidic residues. Residues F272–Y292 form a helical membrane-spanning segment. Topologically, residues V293–S315 are extracellular. A helical transmembrane segment spans residues T316 to A336. Topologically, residues T337–N341 are cytoplasmic. A helical membrane pass occupies residues E342–C362. Over R363–Y365 the chain is Extracellular. Residues V366–M386 form a helical membrane-spanning segment. Topologically, residues P387–L399 are cytoplasmic. A helical transmembrane segment spans residues G400 to I420. The Extracellular segment spans residues Q421–Y434. Residue N431 is glycosylated (N-linked (GlcNAc...) asparagine). A helical transmembrane segment spans residues V435–W455. Residues R456–A472 lie on the Cytoplasmic side of the membrane.

This sequence belongs to the major facilitator superfamily. RibJ family.

It localises to the cell membrane. In terms of biological role, transporter involved in riboflavin (vitamin B2) uptake. Also transports FMN and FAD. In Trypanosoma cruzi (strain CL Brener), this protein is Riboflavin transporter RibJ.